The chain runs to 329 residues: Cathepsin K (329 aa).

An N-terminal signal peptide occupies residues Met-1 to Ala-15. A propeptide spans Leu-16–Arg-114 (activation peptide). N-linked (GlcNAc...) asparagine glycosylation occurs at Asn-103. 3 cysteine pairs are disulfide-bonded: Cys-136–Cys-177, Cys-170–Cys-210, and Cys-269–Cys-318. The active site involves Cys-139. Active-site residues include His-276 and Asn-296.

Belongs to the peptidase C1 family.

Its subcellular location is the lysosome. The protein resides in the secreted. It localises to the apical cell membrane. The catalysed reaction is Broad proteolytic activity. With small-molecule substrates and inhibitors, the major determinant of specificity is P2, which is preferably Leu, Met &gt; Phe, and not Arg.. In terms of biological role, thiol protease involved in osteoclastic bone resorption and may participate partially in the disorder of bone remodeling. Displays potent endoprotease activity against fibrinogen at acid pH. May play an important role in extracellular matrix degradation. Involved in the release of thyroid hormone thyroxine (T4) by limited proteolysis of TG/thyroglobulin in the thyroid follicle lumen. This is Cathepsin K (CTSK) from Macaca fascicularis (Crab-eating macaque).